The chain runs to 800 residues: Putative antiporter subunit mnhA2 (800 aa).

The next 20 helical transmembrane spans lie at 1–21 (MSLV…LLTS), 33–53 (IALT…PSVI), 78–98 (GLSL…FFYA), 118–138 (LFMF…MYVF), 167–187 (FMIT…LYIM), 207–227 (ALFI…SAQF), 241–261 (TPVS…FLLL), 273–293 (YIYI…ITAL), 300–320 (GILA…VGIG), 331–351 (IASI…NHAI), 387–407 (LVMM…GFLS), 424–444 (FSLI…IFTF), 472–492 (PWLF…IFFV), 527–547 (GFNI…VLAI), 595–615 (IIMT…RIGL), 627–647 (GPLE…LIFI), 651–671 (LTMV…FIAM), 676–696 (LALT…VSFS), 712–732 (IIKI…IFIA), and 768–788 (LDTL…YTLL).

This sequence belongs to the CPA3 antiporters (TC 2.A.63) subunit A family. In terms of assembly, may form a heterooligomeric complex that consists of seven subunits: mnhA2, mnhB2, mnhC2, mnhD2, mnhE2, mnhF2 and mnhG2.

The protein resides in the cell membrane. The chain is Putative antiporter subunit mnhA2 (mnhA2) from Staphylococcus aureus (strain MRSA252).